Here is a 64-residue protein sequence, read N- to C-terminus: Large ribosomal subunit protein bL28 (64 aa).

It belongs to the bacterial ribosomal protein bL28 family.

This Mycoplasmoides gallisepticum (strain R(low / passage 15 / clone 2)) (Mycoplasma gallisepticum) protein is Large ribosomal subunit protein bL28.